A 195-amino-acid polypeptide reads, in one-letter code: N-(5'-phosphoribosyl)anthranilate isomerase (195 aa).

This sequence belongs to the TrpF family.

The catalysed reaction is N-(5-phospho-beta-D-ribosyl)anthranilate = 1-(2-carboxyphenylamino)-1-deoxy-D-ribulose 5-phosphate. It participates in amino-acid biosynthesis; L-tryptophan biosynthesis; L-tryptophan from chorismate: step 3/5. In Methanoregula boonei (strain DSM 21154 / JCM 14090 / 6A8), this protein is N-(5'-phosphoribosyl)anthranilate isomerase.